A 356-amino-acid chain; its full sequence is Heat-inducible transcription repressor HrcA (356 aa).

This sequence belongs to the HrcA family.

Functionally, negative regulator of class I heat shock genes (grpE-dnaK-dnaJ and groELS operons). Prevents heat-shock induction of these operons. The sequence is that of Heat-inducible transcription repressor HrcA from Brucella abortus (strain S19).